A 149-amino-acid chain; its full sequence is Small ribosomal subunit protein uS13 (149 aa).

Belongs to the universal ribosomal protein uS13 family. In terms of assembly, part of the 30S ribosomal subunit. Forms a loose heterodimer with protein S19. Forms two bridges to the 50S subunit in the 70S ribosome.

Functionally, located at the top of the head of the 30S subunit, it contacts several helices of the 16S rRNA. In the 70S ribosome it contacts the 23S rRNA (bridge B1a) and protein L5 of the 50S subunit (bridge B1b), connecting the 2 subunits; these bridges are implicated in subunit movement. The polypeptide is Small ribosomal subunit protein uS13 (Methanococcus maripaludis (strain DSM 14266 / JCM 13030 / NBRC 101832 / S2 / LL)).